The sequence spans 368 residues: CST complex subunit STN1 (368 aa).

An interaction with CTC1 region spans residues 1–185; that stretch reads MQPGSSRCEE…KIYDQPFRSS (185 aa). Residues 57–155 constitute a DNA-binding region (OB); that stretch reads VDVLGTVVGV…EIHATAYYKV (99 aa). Winged helix-turn-helix (wHTH) stretches follow at residues 191 to 295 and 296 to 368; these read EALS…YVTR and EDKD…YTAF.

The protein belongs to the STN1 family. As to quaternary structure, component of the CST complex, composed of TEN1/C17orf106, CTC1/C17orf68 and STN1; in the complex interacts directly with TEN1 and CTC1. Interacts with ACD/TPP1, POT1 and POLA1.

The protein localises to the nucleus. It localises to the chromosome. It is found in the telomere. In terms of biological role, component of the CST complex proposed to act as a specialized replication factor promoting DNA replication under conditions of replication stress or natural replication barriers such as the telomere duplex. The CST complex binds single-stranded DNA with high affinity in a sequence-independent manner, while isolated subunits bind DNA with low affinity by themselves. Initially the CST complex has been proposed to protect telomeres from DNA degradation. However, the CST complex has been shown to be involved in several aspects of telomere replication. The CST complex inhibits telomerase and is involved in telomere length homeostasis; it is proposed to bind to newly telomerase-synthesized 3' overhangs and to terminate telomerase action implicating the association with the ACD:POT1 complex thus interfering with its telomerase stimulation activity. The CST complex is also proposed to be involved in fill-in synthesis of the telomeric C-strand probably implicating recruitment and activation of DNA polymerase alpha. The CST complex facilitates recovery from many forms of exogenous DNA damage; seems to be involved in the re-initiation of DNA replication at repaired forks and/or dormant origins. Required for efficicient replication of the duplex region of the telomere. Promotes efficient replication of lagging-strand telomeres. Promotes general replication start following replication-fork stalling implicating new origin firing. May be in involved in C-strand fill-in during late S/G2 phase independent of its role in telomere duplex replication. This chain is CST complex subunit STN1, found in Macaca fascicularis (Crab-eating macaque).